We begin with the raw amino-acid sequence, 453 residues long: Glutamate-rich protein 5 (453 aa).

Disordered regions lie at residues 1–38 (MGCSSSALNKAGDDNRLRSATEESESCFVQPKPRALGR), 66–377 (NGVQ…EHPA), and 394–453 (TNEE…HSML). Residues 11 to 21 (AGDDNRLRSAT) show a composition bias toward basic and acidic residues. Ser-155 is subject to Phosphoserine. Polar residues-rich tracts occupy residues 230 to 243 (LQETVGENEQSQPL) and 271 to 283 (QETLGENEQSQLR). 3 stretches are compositionally biased toward basic and acidic residues: residues 305–332 (EEEKRLQEMLGKDEQPQLRETIPREHGG), 364–374 (IQPERTVESME), and 394–403 (TNEEDQHIEG). A compositionally biased stretch (acidic residues) spans 404-413 (ETGETVETEM). Basic and acidic residues predominate over residues 414–424 (ESEKVSEGAET).

The protein is Glutamate-rich protein 5 (ERICH5) of Bos taurus (Bovine).